The chain runs to 142 residues: Small ribosomal subunit protein uS12 (142 aa).

A disordered region spans residues M1–S30. Positions R11 to Q20 are enriched in basic residues. A compositionally biased stretch (basic and acidic residues) spans R21–S30. P61 is modified (hydroxyproline).

Belongs to the universal ribosomal protein uS12 family.

This is Small ribosomal subunit protein uS12 (RPS23) from Fragaria ananassa (Strawberry).